The following is a 329-amino-acid chain: NAD kinase (329 aa).

A disordered region spans residues 1–26 (MTTPGTDHNADQGADSGDKATKAASG). The Proton acceptor role is filled by D104. Residues 104-105 (DG), R109, 179-180 (NE), D209, and 220-225 (TAYAFS) each bind NAD(+).

This sequence belongs to the NAD kinase family. It depends on a divalent metal cation as a cofactor.

It localises to the cytoplasm. The enzyme catalyses NAD(+) + ATP = ADP + NADP(+) + H(+). Involved in the regulation of the intracellular balance of NAD and NADP, and is a key enzyme in the biosynthesis of NADP. Catalyzes specifically the phosphorylation on 2'-hydroxyl of the adenosine moiety of NAD to yield NADP. The chain is NAD kinase from Corynebacterium jeikeium (strain K411).